A 237-amino-acid polypeptide reads, in one-letter code: MSIHIAAQQGEIADKILLPGDPLRAKFIAENFLEDAVCFNEVRNMFGYTGTYKGHRVSVMGTGMGMPSISIYARELIVDYGVKKLIRVGTAGSLNEDVHVRELVLAQAAATNSNIIRNDWPQYDFPQIASFDLLDKAYHIAKDLGMTTHVGNVLSSDVFYSNYFEKNIELGKWGVKAVEMEAAALYYLAAQHHVDALAIMTISDSLVNPEEDTTAEERQNTFTDMMKVGLETLIAEA.

Residue His4 participates in a purine D-ribonucleoside binding. Residues Gly20, Arg24, Arg43, and 87-90 (RVGT) each bind phosphate. A purine D-ribonucleoside-binding positions include 179–181 (EME) and 203–204 (SD). The Proton donor role is filled by Asp204.

This sequence belongs to the PNP/UDP phosphorylase family. As to quaternary structure, homohexamer; trimer of homodimers.

The catalysed reaction is a purine D-ribonucleoside + phosphate = a purine nucleobase + alpha-D-ribose 1-phosphate. It catalyses the reaction a purine 2'-deoxy-D-ribonucleoside + phosphate = a purine nucleobase + 2-deoxy-alpha-D-ribose 1-phosphate. Catalyzes the reversible phosphorolytic breakdown of the N-glycosidic bond in the beta-(deoxy)ribonucleoside molecules, with the formation of the corresponding free purine bases and pentose-1-phosphate. This chain is Purine nucleoside phosphorylase DeoD-type, found in Streptococcus gordonii (strain Challis / ATCC 35105 / BCRC 15272 / CH1 / DL1 / V288).